Consider the following 250-residue polypeptide: Protein lin-28 homolog B (250 aa).

The disordered stretch occupies residues 1-26; sequence MAEGGASKGGGEEPGKLPEPAEEESQ. Residues 29–102 form the CSD domain; it reads RGTGHCKWFN…GLESIRVTGP (74 aa). Phosphoserine occurs at positions 54, 96, 105, and 110. The tract at residues 98–126 is disordered; it reads RVTGPGGSPCLGSERRPKGKTLQKRKPKG. The short motif at 112-125 is the Bipartite nuclear localization signal element; sequence RRPKGKTLQKRKPK. A compositionally biased stretch (basic residues) spans 114–125; it reads PKGKTLQKRKPK. CCHC-type zinc fingers lie at residues 127–144 and 149–166; these read DRCY…ECSL and KKCH…NCPH. Zn(2+) contacts are provided by cysteine 129, cysteine 132, histidine 137, cysteine 142, cysteine 151, cysteine 154, histidine 159, and cysteine 164. Residues 169 to 250 form a disordered region; it reads VAQPPASSQG…GPSVQKRKKT (82 aa). Over residues 173 to 191 the composition is skewed to polar residues; that stretch reads PASSQGRQEAESQPCTSTL. Serine 203 is modified (phosphoserine). Residues 210–219 are compositionally biased toward basic and acidic residues; it reads ARAEISERSG. Over residues 220-231 the composition is skewed to polar residues; the sequence is RSPQEASSTKSS. The Nucleolar localization signal signature appears at 239–250; it reads KKGPSVQKRKKT.

This sequence belongs to the lin-28 family. In terms of tissue distribution, expressed at high levels in the placenta and, at mucher lower, in testis and fetal liver. Isoform 1 is only detected in placenta and in moderately and poorly differentiated hepatocellular carcinoma cells (at protein level). Isoform 2 is detected in fetal liver, non-tumor liver tissues, as well as well-differentiated tumor tissues (at protein level). Tends to be up-regulated in triple-negative (ER-,PR-,HER2-) breast tumors, as well as in liver, ovarian, and thyroid carcinomas.

The protein resides in the nucleus. It localises to the nucleolus. Its subcellular location is the cytoplasm. Suppressor of microRNA (miRNA) biogenesis, including that of let-7 and possibly of miR107, miR-143 and miR-200c. Binds primary let-7 transcripts (pri-let-7), including pri-let-7g and pri-let-7a-1, and sequester them in the nucleolus, away from the microprocessor complex, hence preventing their processing into mature miRNA. Does not act on pri-miR21. The repression of let-7 expression is required for normal development and contributes to maintain the pluripotent state of embryonic stem cells by preventing let-7-mediated differentiation. When overexpressed, recruits ZCCHC11/TUT4 uridylyltransferase to pre-let-7 transcripts, leading to their terminal uridylation and degradation. This activity might not be relevant in vivo, as LIN28B-mediated inhibition of let-7 miRNA maturation appears to be ZCCHC11-independent. Interaction with target pre-miRNAs occurs via an 5'-GGAG-3' motif in the pre-miRNA terminal loop. Mediates MYC-induced let-7 repression. When overexpressed, isoform 1 stimulates growth of the breast adenocarcinoma cell line MCF-7. Isoform 2 has no effect on cell growth. In Homo sapiens (Human), this protein is Protein lin-28 homolog B (LIN28B).